Reading from the N-terminus, the 495-residue chain is UDP-N-acetylmuramate--L-alanine ligase (495 aa).

Gly-122–Thr-128 is a binding site for ATP.

This sequence belongs to the MurCDEF family.

The protein localises to the cytoplasm. It carries out the reaction UDP-N-acetyl-alpha-D-muramate + L-alanine + ATP = UDP-N-acetyl-alpha-D-muramoyl-L-alanine + ADP + phosphate + H(+). It functions in the pathway cell wall biogenesis; peptidoglycan biosynthesis. Functionally, cell wall formation. The polypeptide is UDP-N-acetylmuramate--L-alanine ligase (Mycobacterium leprae (strain TN)).